The chain runs to 129 residues: Transcription antitermination protein NusB (129 aa).

This sequence belongs to the NusB family.

Its function is as follows. Involved in transcription antitermination. Required for transcription of ribosomal RNA (rRNA) genes. Binds specifically to the boxA antiterminator sequence of the ribosomal RNA (rrn) operons. The protein is Transcription antitermination protein NusB of Staphylococcus aureus (strain USA300 / TCH1516).